A 496-amino-acid chain; its full sequence is Fatty acyl-CoA reductase 8 (496 aa).

Belongs to the fatty acyl-CoA reductase family.

It catalyses the reaction a long-chain fatty acyl-CoA + 2 NADPH + 2 H(+) = a long-chain primary fatty alcohol + 2 NADP(+) + CoA. Its function is as follows. Catalyzes the reduction of fatty acyl-CoA to fatty alcohols. Catalyzes specifically the formation of C16:0 fatty alcohol. The protein is Fatty acyl-CoA reductase 8 (FAR8) of Arabidopsis thaliana (Mouse-ear cress).